A 295-amino-acid polypeptide reads, in one-letter code: Small ribosomal subunit biogenesis GTPase RsgA (295 aa).

Positions Lys-68–Leu-228 constitute a CP-type G domain. GTP-binding positions include Asn-117 to Asp-120 and Gly-170 to Ser-178. The Zn(2+) site is built by Cys-250, Cys-255, His-257, and Cys-263.

The protein belongs to the TRAFAC class YlqF/YawG GTPase family. RsgA subfamily. In terms of assembly, monomer. Associates with 30S ribosomal subunit, binds 16S rRNA. Requires Zn(2+) as cofactor.

It localises to the cytoplasm. Functionally, one of several proteins that assist in the late maturation steps of the functional core of the 30S ribosomal subunit. Helps release RbfA from mature subunits. May play a role in the assembly of ribosomal proteins into the subunit. Circularly permuted GTPase that catalyzes slow GTP hydrolysis, GTPase activity is stimulated by the 30S ribosomal subunit. This chain is Small ribosomal subunit biogenesis GTPase RsgA, found in Thermotoga maritima (strain ATCC 43589 / DSM 3109 / JCM 10099 / NBRC 100826 / MSB8).